The following is a 320-amino-acid chain: o-succinylbenzoate synthase (320 aa).

Lys-133 acts as the Proton donor in catalysis. 3 residues coordinate Mg(2+): Asp-161, Glu-190, and Asp-213. The active-site Proton acceptor is Lys-235.

This sequence belongs to the mandelate racemase/muconate lactonizing enzyme family. MenC type 1 subfamily. A divalent metal cation is required as a cofactor.

It carries out the reaction (1R,6R)-6-hydroxy-2-succinyl-cyclohexa-2,4-diene-1-carboxylate = 2-succinylbenzoate + H2O. The protein operates within quinol/quinone metabolism; 1,4-dihydroxy-2-naphthoate biosynthesis; 1,4-dihydroxy-2-naphthoate from chorismate: step 4/7. It participates in quinol/quinone metabolism; menaquinone biosynthesis. Converts 2-succinyl-6-hydroxy-2,4-cyclohexadiene-1-carboxylate (SHCHC) to 2-succinylbenzoate (OSB). The protein is o-succinylbenzoate synthase of Escherichia coli O7:K1 (strain IAI39 / ExPEC).